The chain runs to 282 residues: Undecaprenyl-diphosphatase (282 aa).

8 consecutive transmembrane segments (helical) span residues 1–21, 40–60, 89–109, 112–132, 153–173, 196–216, 228–248, and 258–278; these read MNLF…FLPI, GAAF…IYFA, WMIA…KHEI, VLRS…VLVV, LSWT…IPGS, FSFL…LYQT, LNLA…IAFL, and GIFI…IGTG.

This sequence belongs to the UppP family.

It localises to the cell inner membrane. The catalysed reaction is di-trans,octa-cis-undecaprenyl diphosphate + H2O = di-trans,octa-cis-undecaprenyl phosphate + phosphate + H(+). Catalyzes the dephosphorylation of undecaprenyl diphosphate (UPP). Confers resistance to bacitracin. In Chlorobaculum tepidum (strain ATCC 49652 / DSM 12025 / NBRC 103806 / TLS) (Chlorobium tepidum), this protein is Undecaprenyl-diphosphatase.